The following is a 295-amino-acid chain: Sulfotransferase 1A1 (295 aa).

48–53 serves as a coordination point for 3'-phosphoadenylyl sulfate; it reads KSGTTW. A substrate-binding site is contributed by 106 to 108; sequence KTH. The Proton acceptor role is filled by H108. 3'-phosphoadenylyl sulfate-binding positions include R130, S138, Y193, 227-232, and 255-259; these read TSFKEM and FMRKG. S138 is modified (phosphoserine).

Belongs to the sulfotransferase 1 family. In terms of assembly, homodimer. In terms of tissue distribution, distal lung parenchyma.

The protein localises to the cytoplasm. The catalysed reaction is a phenol + 3'-phosphoadenylyl sulfate = an aryl sulfate + adenosine 3',5'-bisphosphate + H(+). The enzyme catalyses 17beta-estradiol + 3'-phosphoadenylyl sulfate = 17beta-estradiol 3-sulfate + adenosine 3',5'-bisphosphate + H(+). It carries out the reaction 4-ethylphenol + 3'-phosphoadenylyl sulfate = 4-ethylphenyl sulfate + adenosine 3',5'-bisphosphate + H(+). It catalyses the reaction 4-nitrophenol + 3'-phosphoadenylyl sulfate = 4-nitrophenyl sulfate + adenosine 3',5'-bisphosphate. The catalysed reaction is dopamine + 3'-phosphoadenylyl sulfate = dopamine 3-O-sulfate + adenosine 3',5'-bisphosphate + H(+). The enzyme catalyses dopamine + 3'-phosphoadenylyl sulfate = dopamine 4-O-sulfate + adenosine 3',5'-bisphosphate + H(+). It carries out the reaction 3,3',5-triiodo-L-thyronine + 3'-phosphoadenylyl sulfate = 3,3',5-triiodo-L-thyronine sulfate + adenosine 3',5'-bisphosphate + H(+). It catalyses the reaction 3,3',5'-triiodo-L-thyronine + 3'-phosphoadenylyl sulfate = 3,3',5'-triiodo-L-thyronine sulfate + adenosine 3',5'-bisphosphate + H(+). The catalysed reaction is 3,3'-diiodo-L-thyronine + 3'-phosphoadenylyl sulfate = 3,3'-diiodo-L-thyronine sulfate + adenosine 3',5'-bisphosphate + H(+). The enzyme catalyses L-thyroxine + 3'-phosphoadenylyl sulfate = L-thyroxine sulfate + adenosine 3',5'-bisphosphate + H(+). Functionally, sulfotransferase that utilizes 3'-phospho-5'-adenylyl sulfate (PAPS) as sulfonate donor to catalyze the sulfate conjugation of a wide variety of acceptor molecules bearing a hydroxyl or an amine group. Sulfonation increases the water solubility of most compounds, and therefore their renal excretion, but it can also result in bioactivation to form active metabolites. Displays broad substrate specificity for small phenolic compounds. Plays an important role in the sulfonation of endogenous molecules such as steroid hormones. Mediates also the metabolic activation of carcinogenic N-hydroxyarylamines leading to highly reactive intermediates capable of forming DNA adducts, potentially resulting in mutagenesis. May play a role in gut microbiota-host metabolic interaction. O-sulfonates 4-ethylphenol (4-EP), a dietary tyrosine-derived metabolite produced by gut bacteria. The product 4-EPS crosses the blood-brain barrier and may negatively regulate oligodendrocyte maturation and myelination, affecting the functional connectivity of different brain regions associated with the limbic system. Catalyzes the sulfate conjugation of dopamine. Catalyzes the sulfation of T4 (L-thyroxine/3,5,3',5'-tetraiodothyronine), T3 (3,5,3'-triiodothyronine), rT3 (3,3',5'-triiodothyronine) and 3,3'-T2 (3,3'-diiodothyronine), with a substrate preference of 3,3'-T2 &gt; rT3 &gt; T3 &gt; T4. The protein is Sulfotransferase 1A1 (SULT1A1) of Bos taurus (Bovine).